The primary structure comprises 447 residues: Probable asparagine--tRNA ligase, cytoplasmic (447 aa).

Belongs to the class-II aminoacyl-tRNA synthetase family.

It localises to the cytoplasm. The catalysed reaction is tRNA(Asn) + L-asparagine + ATP = L-asparaginyl-tRNA(Asn) + AMP + diphosphate + H(+). The chain is Probable asparagine--tRNA ligase, cytoplasmic from Vairimorpha ceranae (strain BRL01) (Microsporidian parasite).